Reading from the N-terminus, the 166-residue chain is Peptidoglycan-associated lipoprotein (166 aa).

Positions 1-21 (MEMLKFGKFAALALAMAVAVG) are cleaved as a signal peptide. A lipid anchor (N-palmitoyl cysteine) is attached at Cys-22. A lipid anchor (S-diacylglycerol cysteine) is attached at Cys-22. Residues 54–166 (SEEAALRAIT…AQNRRVELRK (113 aa)) enclose the OmpA-like domain. A disordered region spans residues 147–166 (VATGNDEQSWAQNRRVELRK).

It belongs to the Pal lipoprotein family. The Tol-Pal system is composed of five core proteins: the inner membrane proteins TolA, TolQ and TolR, the periplasmic protein TolB and the outer membrane protein Pal. They form a network linking the inner and outer membranes and the peptidoglycan layer.

Its subcellular location is the cell outer membrane. In terms of biological role, part of the Tol-Pal system, which plays a role in outer membrane invagination during cell division and is important for maintaining outer membrane integrity. The polypeptide is Peptidoglycan-associated lipoprotein (Pseudomonas putida (Arthrobacter siderocapsulatus)).